Reading from the N-terminus, the 116-residue chain is Large ribosomal subunit protein bL20 (116 aa).

It belongs to the bacterial ribosomal protein bL20 family.

In terms of biological role, binds directly to 23S ribosomal RNA and is necessary for the in vitro assembly process of the 50S ribosomal subunit. It is not involved in the protein synthesizing functions of that subunit. This is Large ribosomal subunit protein bL20 from Hydrogenobaculum sp. (strain Y04AAS1).